A 318-amino-acid chain; its full sequence is Glycerol 2-dehydrogenase (NADP(+)) (318 aa).

Residue Tyr52 is the Proton donor of the active site. Residue His115 participates in substrate binding. Residue 217 to 277 (SPLGSQNQVP…SSTPSRIESN (61 aa)) participates in NADP(+) binding.

It belongs to the aldo/keto reductase family.

The enzyme catalyses glycerol + NADP(+) = dihydroxyacetone + NADPH + H(+). Glycerol oxidoreductase probably involved in glycerol synthesis. In Hypocrea jecorina (Trichoderma reesei), this protein is Glycerol 2-dehydrogenase (NADP(+)) (gld2).